The chain runs to 525 residues: Protein disulfide-isomerase A2 (525 aa).

The first 21 residues, 1–21 (MSRQLLPVLLLLLLRASCPWG), serve as a signal peptide directing secretion. One can recognise a Thioredoxin 1 domain in the interval 27–152 (RSPSEEPPEE…IAEWLRRRVG (126 aa)). Active-site nucleophile residues include cysteine 71 and cysteine 74. A disulfide bridge links cysteine 71 with cysteine 74. N-linked (GlcNAc...) asparagine glycosylation is found at asparagine 127 and asparagine 284. The Thioredoxin 2 domain occupies 367-496 (VLNGQVKPYL…FSKFLDNGGV (130 aa)). Catalysis depends on nucleophile residues cysteine 418 and cysteine 421. A disulfide bridge links cysteine 418 with cysteine 421. The interval 492–525 (DNGGVLPTEEPPEEPAAPFPEPPANSTMGSKEEL) is disordered. Over residues 505–514 (EPAAPFPEPP) the composition is skewed to pro residues. A glycan (N-linked (GlcNAc...) asparagine) is linked at asparagine 516. A compositionally biased stretch (polar residues) spans 516–525 (NSTMGSKEEL). A Prevents secretion from ER motif is present at residues 522–525 (KEEL).

It belongs to the protein disulfide isomerase family. As to quaternary structure, monomer; predominantly as monomer under reducing conditions. Homodimer; disulfide-linked. Part of a large chaperone multiprotein complex comprising DNAJB11, HSP90B1, HSPA5, HYOU, PDIA2, PDIA4, PDIA6, PPIB, SDF2L1, UGGT1 and very small amounts of ERP29, but not, or at very low levels, CALR nor CANX. The disulfide-linked homodimer exhibits an enhanced chaperone activity. Post-translationally, glycosylated. Highly expressed in pancreas (at protein level).

The protein localises to the endoplasmic reticulum lumen. The catalysed reaction is Catalyzes the rearrangement of -S-S- bonds in proteins.. Functionally, acts as an intracellular estrogen-binding protein. May be involved in modulating cellular levels and biological functions of estrogens in the pancreas. May act as a chaperone that inhibits aggregation of misfolded proteins. The sequence is that of Protein disulfide-isomerase A2 (PDIA2) from Homo sapiens (Human).